Consider the following 2492-residue polypeptide: MSISLKINIVGANTVKTLRFAPDMCIQECCTHIFEKTNEGGPDHGLYQAHIEGKQSARWLAMEKTLQFYDINSDQQLDYKKKHRPQKFKLLDGTIKTQLVDESQNVSEIVNSICKKMGIKNPEEYSLMNSAGAWLNNTQILSEQGISENDITVLMKKFFFNDANIDRNDPVQLHLLFVQCRDGIIEGKYPTQREESLALSALQCQVQLGDYNPTKHEPGFLTLKDYLPLQWLKSKGVEKDIFKEHKKLVSMTEVNAKYRYVQLCRSLKTYGMTSFDVKIREYGKKKMVDHILGITREQMLLMLTETKEVIMTHPLKHIKRWAATDKSFTLDFGDHETEYLILQTPNPEQISQLIGGYIEIIMKARKDSSKVIEKEDTAMGVEEVMAVKKGSVANSSSYMGYGAGGGGANQLQPSQQIPITDLKSALRATDLLIGELGGFRSSTGATPQNFTRSFTTLTPQQFKHQLISHTNAMAIAAQGLFQDMTTPPPTGGIAAFQQAITKRAQIIMAELNTVGTAAKNAGYFPDMASFSDEIIGVATKLSESMARLLAIGSTIQGTDCDEKSQKAAQTEIFNVQSLVTLMMAACDNEYVTDSSSKLLIECAKNVSAAIADMLVVGNSKVEFIDDELLLGQIQNTLKSTSLTSDELLSTTENLASTSCHPESRKQITNITQSALNQSNALLTAFKSGEIPEQDYNLLNARVSDIIESVNLINYAMDCSEREYKISITSNGVEVGEGEILAGTNLTEEFATVANDLTNAIMTMRSNLKNPDTVMESYKMVAGHANRLITCTKAVASRADTQSQQRLFNSTNAVFESVANLSNHCRSYIKNPEQEAHTFQIVETAGHLQFLTQNMSTDAGKIACITSLRDYSKEMIAQVSSLISTSRTSSQYLPDANGITLLKGAKDVSDALSKLMVGIKKVVLDPKSEATQMELLTLAQKQSLPPMNLVSTCKRFAPKISDPNQKQRLIFSSDAAAQSVQKLMKAGEAYKRICGHIEIEEALEVFDSTIADLETTEIAIAGGFLDAVSGTTREGAAELLMVAIKDLNKVNNELVTDIRVNPARLGDLVKSATESASSVAISAKTLICATTGKQVQTKLMGITKQLMIDMEQLIRASRSVRSNPNDRRSELLLDRRSNDVSISTAALVGSTANVDCKELDEASADISNLLSLKMGSLESILSQPTEEFAFYVEEIASSTKALNAASQQVVAMARNKNLKGLGASAKITASALSTLVSHAQNAIVLTENEATKNAILASTVALGGQIIGLLDFSKARIANYKDPIYDQNLINQAKSVEDHLVKVGRSLGGDGNNTICDEAVDRIIEATRSLDKTILPDTSGLQTNAHLEMLHQQSLLAITQASKKLGSITSNLVNSKNNSDLVGSGSTDAERIIEMIEAAKHVVHCSISTYNPDILLPAKSILDASQMLTANQADVNHVLSHAATIAACTQQLLGITRERASQFNEQDEQQVQVRDGIVKSTQQLAHATSSLARAVKSVTSKEPGAKAMISQSLKDLESAINNLLITSSVPASERGIGIADFNKLMSTCRSVSTASSQLIISASSCSQKPKDIELSSILSENAVLMTNSLKDIIKVTSSMMPGVNFCEEAIEIAQRAISDLSSVALSVAVGSFDSSANNKEGLSHVESQERLVDVTKKIGTGINDLLKASRQSPEAIGISAKALSFIAPSLVNTTKPALATAPDADAQNDLVTESKNVGDSILKLCQASLIASSNPSKETYQIIVNKCVDASEAMSKLVAQISSGVNLYKELDESLDRIRKSVVQTSAKDAPKDSENRGYQEYKEELSNLTKNLALSLKTIVATDGNNLVSISTISKDIANYISDIAHVSSAILATTSDQKIRDSIITSSRQVIVSTGDIVNHIKVNSTDKANSSQAKVNDSYRATNDNITRFLQSLKQGAIGEILSDAAIDQIRKVISDLDGYSLFAAAGQLENDQSSQSTMNEVTKQQHLKNLQKDTITQAKLLIVSSSQLVGSSRGTQEHLGSATTKVANTVSSLVKTAKDIASVLADTTSQQDILSASKALSISSQQMVLATKDAQRFKKDATAFRSLGKSAEAVAEAVGQFLTSVYTAISDAGKGIKELEKSIVQVANYHEKPDTVLSNKDATAEIFAQSARDLAKSSIEIVTSYTSSQDSLVKSSQAVVSNVQSFISNSKGVIALLGNGNDDLKSKVLENVKQTTGDMLALLQCVKDQDKNGSTSIADATRSISDRVHSVVTLSKSLPGGQNIVVEEDNVLEDLEALAEDELSACARSIEEATAKLIAARPQSKSKNGKLDAEGVAATIVDASSAIAKAVAKLVNSAAVAQSKRREDQIASGSVYKADPTWSNGLISAAKGVGAATHRLVEAAMKSATGKAEEEELIATARSVAAATALLVSASRAKSGDDYQSQAAHSHLSTAARQVASATSDLVAAAKAATIFDEQQQEEEQEQFNFTGSKVKELEQQMKILKLEKELETARRQMLNSRKQNYNKN.

The FERM domain maps to 84–365 (RPQKFKLLDG…GYIEIIMKAR (282 aa)). An I/LWEQ domain is found at 2250–2492 (EEDNVLEDLE…NSRKQNYNKN (243 aa)).

It is found in the cytoplasm. It localises to the cytoskeleton. The protein localises to the cell cortex. Functionally, actin-binding protein that may be involved in the control of cell motility and chemotaxis. The protein is Talin-A (talA) of Dictyostelium discoideum (Social amoeba).